Reading from the N-terminus, the 259-residue chain is Ribonuclease T2-B (259 aa).

A signal peptide spans Met1–Ala29. A disulfide bond links Cys53 and Cys59. The active site involves His69. 3 disulfides stabilise this stretch: Cys79/Cys125, Cys188/Cys244, and Cys206/Cys217. N-linked (GlcNAc...) asparagine glycans are attached at residues Asn80 and Asn110. Catalysis depends on residues Glu118 and His122. An N-linked (GlcNAc...) asparagine glycan is attached at Asn216.

Belongs to the RNase T2 family.

It is found in the secreted. It localises to the lysosome lumen. The protein localises to the endoplasmic reticulum lumen. Its subcellular location is the mitochondrion intermembrane space. The enzyme catalyses a ribonucleotidyl-ribonucleotide-RNA + H2O = a 3'-end 3'-phospho-ribonucleotide-RNA + a 5'-end dephospho-ribonucleoside-RNA + H(+). The catalysed reaction is an adenylyl-uridine-RNA = a 3'-end 2',3'-cyclophospho-AMP-RNA + a 5'-end dephospho-uridine-RNA. It catalyses the reaction a guanylyl-uridine-RNA = a 3'-end 2',3'-cyclophospho-GMP-RNA + a 5'-end dephospho-uridine-RNA. Inhibited by Zn(2+) and Cu(2+). Ribonuclease that plays an essential role in innate immune response by recognizing and degrading RNAs from microbial pathogens that are subsequently sensed by TLR8. Cleaves preferentially single-stranded RNA molecules between purine and uridine residues, which critically contributes to the supply of catabolic uridine and the generation of purine-2',3'-cyclophosphate-terminated oligoribonucleotides. In turn, RNase T2 degradation products promote the RNA-dependent activation of TLR8. In plasmacytoid dendritic cells, it cooperates with PLD3 or PLD4 5'-&gt;3' exonucleases to process RNA fragments and release 2',3'-cyclic guanosine monophosphate (2',3'-cGMP), a potent stimulatory ligand for TLR7. Also plays a key role in degradation of mitochondrial RNA and processing of non-coding RNA imported from the cytosol into mitochondria. Participates as well in degradation of mitochondrion-associated cytosolic rRNAs. The protein is Ribonuclease T2-B of Mus musculus (Mouse).